A 586-amino-acid chain; its full sequence is Frizzled-10-A (586 aa).

The signal sequence occupies residues Met-1–Ala-26. Over Ile-27–Lys-230 the chain is Extracellular. The 122-residue stretch at Ser-35–Ala-156 folds into the FZ domain. Cystine bridges form between Cys-40/Cys-101, Cys-48/Cys-94, Cys-85/Cys-123, Cys-112/Cys-153, and Cys-116/Cys-140. Asn-54 carries N-linked (GlcNAc...) asparagine glycosylation. The N-linked (GlcNAc...) asparagine glycan is linked to Asn-159. The interval Thr-161 to Asn-199 is disordered. A helical membrane pass occupies residues Phe-231–Val-251. Residues Leu-252–Pro-267 lie on the Cytoplasmic side of the membrane. A helical membrane pass occupies residues Ile-268–Ala-288. Over Gly-289–Thr-315 the chain is Extracellular. A helical transmembrane segment spans residues Ile-316–Thr-336. Residues Leu-337–Ser-356 lie on the Cytoplasmic side of the membrane. The chain crosses the membrane as a helical span at residues Ser-357 to Met-377. The Extracellular segment spans residues Arg-378 to Gly-401. Residues Phe-402 to Phe-422 traverse the membrane as a helical segment. Over Val-423–Arg-448 the chain is Cytoplasmic. A helical membrane pass occupies residues Ile-449 to Tyr-469. At Glu-470–Glu-507 the chain is on the extracellular side. A helical membrane pass occupies residues Ile-508 to Trp-528. At Thr-529–Val-586 the chain is on the cytoplasmic side. A Lys-Thr-X-X-X-Trp motif, mediates interaction with the PDZ domain of Dvl family members motif is present at residues Lys-531–Trp-536. The interval Lys-563 to Val-586 is disordered. Positions Lys-564–His-573 are enriched in basic residues. The short motif at Thr-584–Val-586 is the PDZ-binding element.

The protein belongs to the G-protein coupled receptor Fz/Smo family. In terms of tissue distribution, expressed in liver, lung, brain, testis, stomach, kidney, eye, skeletal muscle and skin.

It is found in the cell membrane. Its function is as follows. Receptor for Wnt proteins. Most of frizzled receptors are coupled to the beta-catenin canonical signaling pathway, which leads to the activation of disheveled proteins, inhibition of GSK-3 kinase, nuclear accumulation of beta-catenin and activation of Wnt target genes. A second signaling pathway involving PKC and calcium fluxes has been seen for some family members, but it is not yet clear if it represents a distinct pathway or if it can be integrated in the canonical pathway, as PKC seems to be required for Wnt-mediated inactivation of GSK-3 kinase. Both pathways seem to involve interactions with G-proteins. May be involved in transduction and intercellular transmission of polarity information during tissue morphogenesis and/or in differentiated tissues. Activated by Wnt8. Could have an antagonizing activity in the morphogenesis during development. In Xenopus laevis (African clawed frog), this protein is Frizzled-10-A (fzd10-a).